The following is a 290-amino-acid chain: Membrane protein insertase YidC 1 (290 aa).

A signal peptide spans 1 to 19; that stretch reads MKKKALLPLFLGIMIFLAG. The N-palmitoyl cysteine moiety is linked to residue C20. C20 carries the S-diacylglycerol cysteine lipid modification. 5 consecutive transmembrane segments (helical) span residues 56–76, 134–154, 176–196, 211–231, and 232–252; these read FGLA…PFML, MLGC…YFVL, PDIW…VVSS, MVIS…ALGL, and YWSV…IYYS. The disordered stretch occupies residues 270-290; that stretch reads HNPYSKKKGKNTQVVSKKNKK. Positions 280–290 are enriched in polar residues; sequence NTQVVSKKNKK.

This sequence belongs to the OXA1/ALB3/YidC family. Type 2 subfamily.

It is found in the cell membrane. Its function is as follows. Required for the insertion and/or proper folding and/or complex formation of integral membrane proteins into the membrane. Involved in integration of membrane proteins that insert both dependently and independently of the Sec translocase complex, as well as at least some lipoproteins. The sequence is that of Membrane protein insertase YidC 1 from Staphylococcus epidermidis (strain ATCC 12228 / FDA PCI 1200).